Consider the following 105-residue polypeptide: Nucleoid-associated protein RPC_4847 (105 aa).

This sequence belongs to the YbaB/EbfC family. Homodimer.

It localises to the cytoplasm. The protein resides in the nucleoid. Its function is as follows. Binds to DNA and alters its conformation. May be involved in regulation of gene expression, nucleoid organization and DNA protection. This is Nucleoid-associated protein RPC_4847 from Rhodopseudomonas palustris (strain BisB18).